An 855-amino-acid polypeptide reads, in one-letter code: MILIPRMLLVLFLLLPILSSAKAQVNPAICRYPLGMSGGQIPDEDITASSQWSESTAAKYGRLDSEEGDGAWCPEIPVEPDDLKEFLQIDLHTLHFITLVGTQGRHAGGHGIEFAPMYKINYSRDGTRWISWRNRHGKQVLDGNSNPYDIFLKDLEPPIVARFVRFIPVTDHSMNVCMRVELYGCVWLDGLVSYNAPAGQQFVLPGGSIIYLNDSVYDGAVGYSMTEGLGQLTDGVSGLDDFTQTHEYHVWPGYDYVGWRNESATNGYIEIMFEFDRIRNFTTMKVHCNNMFAKGVKIFKEVQCYFRSEASEWEPNAISFPLVLDDVNPSARFVTVPLHHRMASAIKCQYHFADTWMMFSEITFQSDAAMYNNSEALPTSPMAPTTYDPMLKVDDSNTRILIGCLVAIIFILLAIIVIILWRQFWQKMLEKASRRMLDDEMTVSLSLPSDSSMFNNNRSSSPSEQGSNSTYDRIFPLRPDYQEPSRLIRKLPEFAPGEEESGCSGVVKPVQPSGPEGVPHYAEADIVNLQGVTGGNTYSVPAVTMDLLSGKDVAVEEFPRKLLTFKEKLGEGQFGEVHLCEVEGMEKFKDKDFALDVSANQPVLVAVKMLRADANKNARNDFLKEIKIMSRLKDPNIIHLLAVCITDDPLCMITEYMENGDLNQFLSRHEPPNSSSSDVRTVSYTNLKFMATQIASGMKYLSSLNFVHRDLATRNCLVGKNYTIKIADFGMSRNLYSGDYYRIQGRAVLPIRWMSWESILLGKFTTASDVWAFGVTLWETFTFCQEQPYSQLSDEQVIENTGEFFRDQGRQTYLPQPAICPDSVYKLMLSCWRRDTKNRPSFQEIHLLLLQQGDE.

An N-terminal signal peptide occupies residues 1-21 (MILIPRMLLVLFLLLPILSSA). Topologically, residues 22–399 (KAQVNPAICR…MLKVDDSNTR (378 aa)) are extracellular. The F5/8 type C domain maps to 30–185 (CRYPLGMSGG…VCMRVELYGC (156 aa)). 2 disulfide bridges follow: C30–C185 and C73–C177. N121, N213, N261, N280, and N372 each carry an N-linked (GlcNAc...) asparagine glycan. A helical transmembrane segment spans residues 400 to 421 (ILIGCLVAIIFILLAIIVIILW). At 422-855 (RQFWQKMLEK…HLLLLQQGDE (434 aa)) the chain is on the cytoplasmic side. The segment at 452–471 (SMFNNNRSSSPSEQGSNSTY) is disordered. Phosphotyrosine; by SRC and autocatalysis is present on Y471. One can recognise a Protein kinase domain in the interval 563-849 (LTFKEKLGEG…PSFQEIHLLL (287 aa)). ATP-binding positions include 569 to 577 (LGEGQFGEV) and K608. Catalysis depends on D710, which acts as the Proton acceptor. A phosphotyrosine; by SRC and autocatalysis mark is found at Y736, Y740, and Y741.

Belongs to the protein kinase superfamily. Tyr protein kinase family. Insulin receptor subfamily. In terms of assembly, binds hydroxyproline-rich sequence motifs in fibrillar, glycosylated collagen, such as the GQOGVMGFO motif, where O stands for hydroxyproline. Interacts with SRC. Interacts (tyrosine phosphorylated) with SHC1. N-glycosylated. In terms of processing, tyrosine phosphorylated in response to collagen binding. Phosphorylated by SRC; this is required for activation and subsequent autophosphorylation on additional tyrosine residues. Detected in osteocytes, osteoblastic cells in subchondral bone, bone lining cells, tibia and cartilage (at protein level). Detected at high levels in heart and lung, and at low levels in brain, placenta, liver, skeletal muscle, pancreas, and kidney.

It localises to the cell membrane. The catalysed reaction is L-tyrosyl-[protein] + ATP = O-phospho-L-tyrosyl-[protein] + ADP + H(+). Present in an inactive state in the absence of collagen binding and phosphorylation by SRC. Tyrosine phosphorylation enhances the affinity for ATP and the catalytic activity. In terms of biological role, tyrosine kinase involved in the regulation of tissues remodeling. It functions as a cell surface receptor for fibrillar collagen and regulates cell differentiation, remodeling of the extracellular matrix, cell migration and cell proliferation. Required for normal bone development. Regulates osteoblast differentiation and chondrocyte maturation via a signaling pathway that involves MAP kinases and leads to the activation of the transcription factor RUNX2. Regulates remodeling of the extracellular matrix by up-regulation of the collagenases MMP1, MMP2 and MMP13, and thereby facilitates cell migration and tumor cell invasion. Promotes fibroblast migration and proliferation, and thereby contributes to cutaneous wound healing. The protein is Discoidin domain-containing receptor 2 (DDR2) of Homo sapiens (Human).